Consider the following 455-residue polypeptide: MSEAFDSRASKALPIEVLISPFVRFARMEAASGILLIVSTAAALVWANSPWKSSYDAIWDVPMVAGVGNFLLTESRHHWINDGLMSIFFFLVGLEIKREVLIGELTSLRNAAFPLIAAVGGTVVPAVIYLLCVGGGVAQKGWGIPMATDIAFALGVLILLGNRIPPSLRVFVTALAIVDDIIAVLVIALFYTHEIHLVSLLVALGGVGIAFGFNLLGISKPSVYALIGVCIWAAVLKSGVHATVAGVLLAFTIPARNYLDRDFFVKRGRWLLERFEKSEPHSFESHTAIHTLQHQCDMIESPLHRLEHGLQPWVSFLIMPLFAFSNAGVRFIGNIGVAVKHPVSIGVALGLFLGKPLGIWLFAWLAVKSRVANAPPELSWWQIFGASWICGIGFTMSLFIASLAFGYGNLLDMSKIGTLAASLVAGVCGSVVLWRRSALGTSEPPVSPATTSASV.

Transmembrane regions (helical) follow at residues 31–51, 83–103, 113–133, 141–161, 170–190, 198–218, 231–251, 309–329, 345–365, 383–403, and 414–434; these read ASGI…NSPW, GLMS…VLIG, FPLI…LLCV, GWGI…ILLG, VFVT…IALF, VSLL…LLGI, IWAA…LLAF, GLQP…NAGV, IGVA…FAWL, IFGA…IASL, and SKIG…VVLW.

Belongs to the NhaA Na(+)/H(+) (TC 2.A.33) antiporter family.

It localises to the cell inner membrane. It catalyses the reaction Na(+)(in) + 2 H(+)(out) = Na(+)(out) + 2 H(+)(in). Its function is as follows. Na(+)/H(+) antiporter that extrudes sodium in exchange for external protons. The protein is Na(+)/H(+) antiporter NhaA of Koribacter versatilis (strain Ellin345).